Consider the following 403-residue polypeptide: Phosphoglycerate kinase (403 aa).

Residues 21–23, Arg36, 59–62, Arg119, and Arg154 each bind substrate; these read DFN and HLGR. ATP contacts are provided by residues Lys207, Gly299, Glu330, and 357 to 360; that span reads GGDA.

It belongs to the phosphoglycerate kinase family. In terms of assembly, monomer.

The protein resides in the cytoplasm. It carries out the reaction (2R)-3-phosphoglycerate + ATP = (2R)-3-phospho-glyceroyl phosphate + ADP. It participates in carbohydrate degradation; glycolysis; pyruvate from D-glyceraldehyde 3-phosphate: step 2/5. The chain is Phosphoglycerate kinase (pgk) from Chlamydia muridarum (strain MoPn / Nigg).